We begin with the raw amino-acid sequence, 204 residues long: Putative AgrB-like protein (204 aa).

A run of 4 helical transmembrane segments spans residues 40–60 (IILINVMKFAIVYGISLATGL), 87–107 (LNCTLISLAMFVLAPFVFQNI), 111–131 (NWIVLGTFAFILLNMFLFAPA), and 156–176 (LILTGIALLIPFAEMKTLIMV).

The protein belongs to the AgrB family.

Its subcellular location is the cell membrane. Its function is as follows. May be involved in the proteolytic processing of a quorum sensing system signal molecule precursor. The sequence is that of Putative AgrB-like protein from Listeria welshimeri serovar 6b (strain ATCC 35897 / DSM 20650 / CCUG 15529 / CIP 8149 / NCTC 11857 / SLCC 5334 / V8).